We begin with the raw amino-acid sequence, 30 residues long: ATP-dependent Clp protease ATP-binding subunit ClpA homolog (30 aa).

The protein belongs to the ClpA/ClpB family.

The protein localises to the plastid. The protein resides in the chloroplast. In terms of biological role, may interact with a ClpP-like protease involved in degradation of denatured proteins in the chloroplast. In Pinus pinaster (Maritime pine), this protein is ATP-dependent Clp protease ATP-binding subunit ClpA homolog.